The sequence spans 220 residues: DNA mismatch repair protein MutH (220 aa).

This sequence belongs to the MutH family.

The protein resides in the cytoplasm. Functionally, sequence-specific endonuclease that cleaves unmethylated GATC sequences. It is involved in DNA mismatch repair. The chain is DNA mismatch repair protein MutH from Buchnera aphidicola subsp. Baizongia pistaciae (strain Bp).